The primary structure comprises 1592 residues: Serine/threonine-protein kinase mrck-1 (1592 aa).

The involved in homo-dimerization stretch occupies residues 1-954 (MAEPPPDDSA…IFSPVSISAM (954 aa)). The 269-residue stretch at 83–351 (FEVLKVIGKG…LSDFQLHPFF (269 aa)) folds into the Protein kinase domain. ATP is bound by residues 89-97 (IGKGAFGEV) and Lys112. The active-site Proton acceptor is Asp207. An AGC-kinase C-terminal domain is found at 352–426 (EGIDWNTIRD…THGSLLSDAR (75 aa)). The residue at position 415 (Ser415) is a Phosphoserine. Tyr416 bears the Phosphotyrosine mark. Coiled-coil stretches lie at residues 444 to 782 (ELME…KNNS) and 811 to 871 (LDLQ…IENS). A compositionally biased stretch (polar residues) spans 782-796 (SPLTTSNYIQNTPSG). The tract at residues 782 to 801 (SPLTTSNYIQNTPSGWGSRR) is disordered. An involved in binding to membranes, with a preference for di-phosphorylated phosphoinositides (PIPs) region spans residues 955 to 1534 (ERGHNFERMK…FRTIGKDDRS (580 aa)). The segment at 957–1007 (GHNFERMKIKTPTKCGHCTSILIGLDRQGLFCQSCQYACHVSCAERVSQSC) adopts a Phorbol-ester/DAG-type zinc-finger fold. His958, Cys971, Cys974, Cys988, Cys991, His996, Cys999, and Cys1007 together coordinate Zn(2+). The 129-residue stretch at 1026–1154 (GTAYEGLVKT…WVVALSELKT (129 aa)) folds into the PH domain. The CNH domain maps to 1181-1479 (IRVAQCCAII…KPLSGDGILS (299 aa)). A CRIB domain is found at 1544–1557 (ISTPSDFMHIVHMG). Positions 1544–1557 (ISTPSDFMHIVHMG) are involved in interaction with cdc-42 (GTP-bound). Deletion prevents rescue of a null mutant; furthermore deleted form of mrck-1 is no longer recruited to the cell cortex and instead appears to be completely cytoplasmic.

The protein belongs to the protein kinase superfamily. AGC Ser/Thr protein kinase family. DMPK subfamily. In terms of assembly, homodimer, via N-terminal domains. Interacts (via the CRIB domain) with cdc-42 (GTP-bound), but with a lower affinity for cdc-42 bound to GDP; the interaction is direct and may play a role in the recruitment of mrck-1 to the apical membrane. Requires Mg(2+) as cofactor. In terms of tissue distribution, expressed in embryonic and L4 larval seam cells and in embryonic dorsal and ventral epidermal cells. Also expressed in the pharynx throughout development and in sublateral nerve cords in the L4 larva.

The protein localises to the cytoplasm. It is found in the cell cortex. It catalyses the reaction L-seryl-[protein] + ATP = O-phospho-L-seryl-[protein] + ADP + H(+). The enzyme catalyses L-threonyl-[protein] + ATP = O-phospho-L-threonyl-[protein] + ADP + H(+). In terms of biological role, serine/threonine-protein kinase. Involved in regulating endoderm precursor cell movements during early gastrulation; activates apical myosin and thereby increases actomyosin contractility and tension in the apical cell cortex, probably as a result of recruitment of mrck-1 to the cortex by a combination of interaction with active cdc-42 and membrane binding. May phosphorylate and inactivate the phosphatase mel-11, and thereby contribute to the regulation of myosin II contractility during embryonic elongation. Involved in controlling canal length and Golgi/ER integrity during excretory canal elongation. This Caenorhabditis elegans protein is Serine/threonine-protein kinase mrck-1.